Here is a 156-residue protein sequence, read N- to C-terminus: Ribosomal RNA large subunit methyltransferase H (156 aa).

Residues Leu-73, Gly-104, and 123–128 (LSPLTL) contribute to the S-adenosyl-L-methionine site.

The protein belongs to the RNA methyltransferase RlmH family. In terms of assembly, homodimer.

The protein resides in the cytoplasm. The enzyme catalyses pseudouridine(1915) in 23S rRNA + S-adenosyl-L-methionine = N(3)-methylpseudouridine(1915) in 23S rRNA + S-adenosyl-L-homocysteine + H(+). Its function is as follows. Specifically methylates the pseudouridine at position 1915 (m3Psi1915) in 23S rRNA. In Photobacterium profundum (strain SS9), this protein is Ribosomal RNA large subunit methyltransferase H.